The chain runs to 253 residues: uncharacterized protein (253 aa).

The segment covering 1–14 (MKVPILSRLRSLSS) has biased composition (low complexity). 2 disordered regions span residues 1-192 (MKVP…PKSS) and 212-253 (PETV…AIQL). 2 stretches are compositionally biased toward basic and acidic residues: residues 17–30 (RNNEEKNVDMEHQV) and 45–60 (KSDKNNKHDKHDKSGE). 2 stretches are compositionally biased toward low complexity: residues 63-104 (PSTP…GSDS) and 111-154 (KTLS…QTPR). Over residues 215–235 (VVTSTPRQQSRPPSAQNTPNF) the composition is skewed to polar residues. Positions 236–253 (TSQGGSRSTSRRQSAIQL) are enriched in low complexity.

This is an uncharacterized protein from Dictyostelium discoideum (Social amoeba).